A 326-amino-acid chain; its full sequence is Dolichyl-phosphate beta-glucosyltransferase (326 aa).

Over 1-7 (MWTCLCQ) the chain is Lumenal. A helical membrane pass occupies residues 8–28 (LCFYLLSTLAVAALSIAALVL). Residues 29 to 326 (YKTKPYPNIK…RIASIQKKEK (298 aa)) lie on the Cytoplasmic side of the membrane.

Belongs to the glycosyltransferase 2 family.

Its subcellular location is the endoplasmic reticulum membrane. The enzyme catalyses a di-trans,poly-cis-dolichyl phosphate + UDP-alpha-D-glucose = a di-trans,poly-cis-dolichyl beta-D-glucosyl phosphate + UDP. It functions in the pathway protein modification; protein glycosylation. Required for normal production of N-glycosylated proteins in the endoplasmic reticulum (ER). Required for embryonic segmentation, dorsal-ventral patterning and gastrulation. Required for chitin orientation and shaping of the apical and lateral plasma membranes of epidermal cells during cuticle differentiation. Also required for correctly shaping apical membrane topology of the epithelia of other organs such as the midgut and the hindgut. The protein is Dolichyl-phosphate beta-glucosyltransferase (wol) of Drosophila melanogaster (Fruit fly).